We begin with the raw amino-acid sequence, 290 residues long: uncharacterized protein (290 aa).

This sequence belongs to the UreD family.

Its subcellular location is the cytoplasm. It is found in the nucleus. Functionally, probably facilitates nickel incorporation. This is an uncharacterized protein from Schizosaccharomyces pombe (strain 972 / ATCC 24843) (Fission yeast).